Here is a 558-residue protein sequence, read N- to C-terminus: Oxygen-dependent choline dehydrogenase (558 aa).

Position 4–33 (4–33 (DYIIIGAGSAGNVLATRLTEDSDTTVLLLE)) interacts with FAD. His-473 acts as the Proton acceptor in catalysis.

This sequence belongs to the GMC oxidoreductase family. FAD serves as cofactor.

The enzyme catalyses choline + A = betaine aldehyde + AH2. It catalyses the reaction betaine aldehyde + NAD(+) + H2O = glycine betaine + NADH + 2 H(+). It participates in amine and polyamine biosynthesis; betaine biosynthesis via choline pathway; betaine aldehyde from choline (cytochrome c reductase route): step 1/1. In terms of biological role, involved in the biosynthesis of the osmoprotectant glycine betaine. Catalyzes the oxidation of choline to betaine aldehyde and betaine aldehyde to glycine betaine at the same rate. The polypeptide is Oxygen-dependent choline dehydrogenase (Citrobacter koseri (strain ATCC BAA-895 / CDC 4225-83 / SGSC4696)).